We begin with the raw amino-acid sequence, 102 residues long: Small ribosomal subunit protein uS10 (102 aa).

The protein belongs to the universal ribosomal protein uS10 family. As to quaternary structure, part of the 30S ribosomal subunit.

Its function is as follows. Involved in the binding of tRNA to the ribosomes. The protein is Small ribosomal subunit protein uS10 of Roseiflexus castenholzii (strain DSM 13941 / HLO8).